We begin with the raw amino-acid sequence, 60 residues long: Potassium channel toxin alpha-KTx 3.6 (60 aa).

The first 22 residues, 1 to 22 (MKVFFAVLITLFICSMIIGIHG), serve as a signal peptide directing secretion. Cystine bridges form between cysteine 29-cysteine 49, cysteine 35-cysteine 54, and cysteine 39-cysteine 56. A Lysine amide modification is found at lysine 59.

This sequence belongs to the short scorpion toxin superfamily. Potassium channel inhibitor family. Alpha-KTx 03 subfamily. As to expression, expressed by the venom gland.

Its subcellular location is the secreted. Blocks voltage-gated potassium channels. At 2 uM, blocks rat Kv1.1/KCNA1 and Kv1.3/KCNA3, has a strong effect on rat Kv1.2/KCNA2 and Kv1.6/KCNA6 as well as a moderate effect on Shaker IR. The polypeptide is Potassium channel toxin alpha-KTx 3.6 (Olivierus martensii (Manchurian scorpion)).